A 559-amino-acid chain; its full sequence is 5-epiaristolochene synthase (559 aa).

Residues D312, D316, D455, T459, and E463 each coordinate Mg(2+). Positions 312-316 (DDTYD) match the DDXXD motif motif.

The protein belongs to the terpene synthase family. In terms of assembly, monomer. Requires Mg(2+) as cofactor. Expressed only in treated leaves an not detected in control leaves.

It is found in the cytoplasm. It catalyses the reaction (2E,6E)-farnesyl diphosphate = (+)-5-epi-aristolochene + diphosphate. It functions in the pathway secondary metabolite biosynthesis; terpenoid biosynthesis. Catalyzes the cyclization of trans,trans-farnesyl diphosphate (FPP) to the bicyclic intermediate 5-epi-aristolochene, initial step in the conversion of FPP to the sesquiterpenoid antifungal phytoalexin capsidiol. Produces germacrene A as an enzyme-bound intermediate that is not released by the enzyme, but is further cyclized to produce the bicyclic 5-epi-aristolochene. In Capsicum annuum (Capsicum pepper), this protein is 5-epiaristolochene synthase (EAS).